The chain runs to 612 residues: Transcription factor unc-37 (612 aa).

The tract at residues F143–Q228 is disordered. Residues G150–G159 are compositionally biased toward gly residues. The interval G153–A196 is CCN domain. Residues D171–T182 show a composition bias toward acidic residues. Residues D202–S221 are compositionally biased toward polar residues. WD repeat units follow at residues G308–T339, L372–D402, T414–D444, G456–D486, Q538–R568, and K579–A609.

This sequence belongs to the WD repeat Groucho/TLE family. Interacts with unc-4. Interacts with ref-1. May interact with mls-1.

The protein resides in the nucleus. Transcriptional corepressor that functions with the neural specificity gene unc-4 to govern motor neuron identity. In concert with unc-4, represses the expression of VB-specific genes such as ceh-12, thereby preventing the adoption of VB motor neuron fate. May function with transcription factor mls-1 to promote uterine muscle specification and formation. The protein is Transcription factor unc-37 (unc-37) of Caenorhabditis elegans.